The primary structure comprises 209 residues: MTVLLFGFEPFLEYKENPSQLIVEALNGSTILKEEVKGVILPVEYEKIEDLIVTKIREMKPILTLGIGVAPGRAKITPEKIAINYKYSREGDNAGKKYKGEKIDPLGQDGIFTNIPVEDLVDLLNENGIPAELSLSAGSYLCNNAMYIIIREARKYNSLGGFIHVPLHESYAARIQRPIPSMSLDTMIRGIRLSMEFILTNKKENLTFS.

Residues E79, C142, and H164 contribute to the active site.

This sequence belongs to the peptidase C15 family. Homotetramer.

The protein resides in the cytoplasm. The catalysed reaction is Release of an N-terminal pyroglutamyl group from a polypeptide, the second amino acid generally not being Pro.. In terms of biological role, removes 5-oxoproline from various penultimate amino acid residues except L-proline. The polypeptide is Pyrrolidone-carboxylate peptidase (Saccharolobus islandicus (strain L.S.2.15 / Lassen #1) (Sulfolobus islandicus)).